The chain runs to 187 residues: Keratin-associated protein 5-8 (187 aa).

Tandem repeats lie at residues 28–31 (CCVP), 34–37 (CCKP), 40–43 (CCVP), 109–112 (CCKP), 119–122 (CCKP), 138–141 (CCKP), 148–151 (CCKP), 167–170 (CCKP), and 177–180 (CCVP). Residues 28-180 (CCVPICCCKP…CCSQSSCCVP (153 aa)) form a 9 X 4 AA repeats of C-C-X-P region.

This sequence belongs to the KRTAP type 5 family. In terms of tissue distribution, restricted to hair root, not detected in any other tissues. Expressed in cuticle layers of differentiating hair follicles.

Its function is as follows. In the hair cortex, hair keratin intermediate filaments are embedded in an interfilamentous matrix, consisting of hair keratin-associated protein (KRTAP), which are essential for the formation of a rigid and resistant hair shaft through their extensive disulfide bond cross-linking with abundant cysteine residues of hair keratins. The matrix proteins include the high-sulfur and high-glycine-tyrosine keratins. The protein is Keratin-associated protein 5-8 (KRTAP5-8) of Homo sapiens (Human).